Here is a 446-residue protein sequence, read N- to C-terminus: G patch domain-containing protein 4 (446 aa).

Position 1 is an N-acetylmethionine (Met-1). Thr-4 bears the Phosphothreonine mark. One can recognise a G-patch domain in the interval 11–57 (GMKFAEEQLLKHGWTQGKGLGRKENGITQALRVTLKQDTHGVGHDPA). Lys-46 is covalently cross-linked (Glycyl lysine isopeptide (Lys-Gly) (interchain with G-Cter in SUMO2)). Position 116 is a phosphothreonine (Thr-116). Disordered stretches follow at residues 116-140 (TSGG…SKSP) and 188-446 (QDPG…KKRD). Ser-128, Ser-130, and Ser-139 each carry phosphoserine. A coiled-coil region spans residues 166–251 (TMKAKLARLE…KKKRRHQEGK (86 aa)). The segment covering 219-237 (ASERNDADEKHPEHAEQNI) has biased composition (basic and acidic residues). The segment covering 238–248 (RKSKKKKRRHQ) has biased composition (basic residues). 4 stretches are compositionally biased toward basic and acidic residues: residues 249–268 (EGKV…KEDA), 297–328 (HHEE…ESRA), 363–375 (REAE…DGRS), and 392–409 (LDVR…ESRA). 2 stretches are compositionally biased toward basic residues: residues 416–427 (RGKRKRQQHPKK) and 437–446 (KAKKKQKKRD).

The polypeptide is G patch domain-containing protein 4 (GPATCH4) (Homo sapiens (Human)).